The chain runs to 417 residues: UDP-N-acetylglucosamine 1-carboxyvinyltransferase (417 aa).

Phosphoenolpyruvate is bound at residue 22–23 (KN). Arg-92 lines the UDP-N-acetyl-alpha-D-glucosamine pocket. Cys-116 acts as the Proton donor in catalysis. Cys-116 carries the post-translational modification 2-(S-cysteinyl)pyruvic acid O-phosphothioketal. UDP-N-acetyl-alpha-D-glucosamine contacts are provided by residues 161-164 (KVSV), Asp-305, and Ile-327.

Belongs to the EPSP synthase family. MurA subfamily.

It localises to the cytoplasm. The enzyme catalyses phosphoenolpyruvate + UDP-N-acetyl-alpha-D-glucosamine = UDP-N-acetyl-3-O-(1-carboxyvinyl)-alpha-D-glucosamine + phosphate. It functions in the pathway cell wall biogenesis; peptidoglycan biosynthesis. In terms of biological role, cell wall formation. Adds enolpyruvyl to UDP-N-acetylglucosamine. The polypeptide is UDP-N-acetylglucosamine 1-carboxyvinyltransferase (Pelagibacter ubique (strain HTCC1062)).